Here is a 487-residue protein sequence, read N- to C-terminus: Cobyric acid synthase (487 aa).

One can recognise a GATase cobBQ-type domain in the interval 248-435; it reads VLKVIVPVLP…LHGLFEGSQS (188 aa). C329 acts as the Nucleophile in catalysis. H427 is a catalytic residue.

Belongs to the CobB/CobQ family. CobQ subfamily.

It participates in cofactor biosynthesis; adenosylcobalamin biosynthesis. Functionally, catalyzes amidations at positions B, D, E, and G on adenosylcobyrinic A,C-diamide. NH(2) groups are provided by glutamine, and one molecule of ATP is hydrogenolyzed for each amidation. This chain is Cobyric acid synthase, found in Pseudomonas entomophila (strain L48).